The following is a 556-amino-acid chain: 2-succinyl-5-enolpyruvyl-6-hydroxy-3-cyclohexene-1-carboxylate synthase (556 aa).

It belongs to the TPP enzyme family. MenD subfamily. In terms of assembly, homodimer. It depends on Mg(2+) as a cofactor. Mn(2+) serves as cofactor. Thiamine diphosphate is required as a cofactor.

The enzyme catalyses isochorismate + 2-oxoglutarate + H(+) = 5-enolpyruvoyl-6-hydroxy-2-succinyl-cyclohex-3-ene-1-carboxylate + CO2. It functions in the pathway quinol/quinone metabolism; 1,4-dihydroxy-2-naphthoate biosynthesis; 1,4-dihydroxy-2-naphthoate from chorismate: step 2/7. Its pathway is quinol/quinone metabolism; menaquinone biosynthesis. Functionally, catalyzes the thiamine diphosphate-dependent decarboxylation of 2-oxoglutarate and the subsequent addition of the resulting succinic semialdehyde-thiamine pyrophosphate anion to isochorismate to yield 2-succinyl-5-enolpyruvyl-6-hydroxy-3-cyclohexene-1-carboxylate (SEPHCHC). In Salmonella agona (strain SL483), this protein is 2-succinyl-5-enolpyruvyl-6-hydroxy-3-cyclohexene-1-carboxylate synthase.